Consider the following 369-residue polypeptide: MRN complex-interacting protein (369 aa).

Ser-115 carries the post-translational modification Phosphoserine. Disordered regions lie at residues 122–150 (GGGV…PRKR), 209–245 (PSFT…PCPA), and 282–317 (AQAE…TPMP). A Nuclear localization signal (NLS) motif is present at residues 148 to 151 (RKRK). Over residues 221–230 (KGRESSREDL) the composition is skewed to basic and acidic residues. The segment at 223 to 259 (RESSREDLDTMELVPRGEPPCPAQQVRTMSKWEQCLG) is necessary for the association with the MRN complex.

It belongs to the MRNIP family. In terms of assembly, associates with the MRE11-RAD50-NBN (MRN) damage-sensing complex; this association is constitutive. Interacts with MRE11. Interacts with NBN. Interacts with RAD50. In terms of processing, phosphorylated; phosphorylation is constitutive and occurs in the absence of any DNA-damaging stimulus. Phosphorylation on Ser-115 is necessary for its nuclear retention.

It is found in the nucleus. It localises to the nucleoplasm. Functionally, plays a role in the cellular response to DNA damage and the maintenance of genome stability through its association with the MRN damage-sensing complex. Promotes chromatin loading and activity of the MRN complex to facilitate subsequent ATM-mediated DNA damage response signaling and DNA repair. This is MRN complex-interacting protein from Bos taurus (Bovine).